Reading from the N-terminus, the 169-residue chain is Cytochrome c-type biogenesis protein CcmE (169 aa).

The Cytoplasmic portion of the chain corresponds to Met1–Arg7. Residues Met8 to Ala28 traverse the membrane as a helical; Signal-anchor for type II membrane protein segment. The Periplasmic portion of the chain corresponds to Leu29 to Arg169. 2 residues coordinate heme: His122 and Tyr126. Positions Asp143–Arg169 are disordered. Over residues Thr158 to Arg169 the composition is skewed to polar residues.

Belongs to the CcmE/CycJ family.

The protein resides in the cell inner membrane. In terms of biological role, heme chaperone required for the biogenesis of c-type cytochromes. Transiently binds heme delivered by CcmC and transfers the heme to apo-cytochromes in a process facilitated by CcmF and CcmH. This chain is Cytochrome c-type biogenesis protein CcmE, found in Bradyrhizobium diazoefficiens (strain JCM 10833 / BCRC 13528 / IAM 13628 / NBRC 14792 / USDA 110).